We begin with the raw amino-acid sequence, 255 residues long: 5'-nucleotidase SurE (255 aa).

D16, D17, S47, and N100 together coordinate a divalent metal cation.

It belongs to the SurE nucleotidase family. It depends on a divalent metal cation as a cofactor.

The protein localises to the cytoplasm. The catalysed reaction is a ribonucleoside 5'-phosphate + H2O = a ribonucleoside + phosphate. Its function is as follows. Nucleotidase that shows phosphatase activity on nucleoside 5'-monophosphates. This is 5'-nucleotidase SurE from Vibrio vulnificus (strain CMCP6).